A 111-amino-acid polypeptide reads, in one-letter code: MADPQLITTAFDIPGYRIERSLGVARGIVVRSRSIVGTFGASIQTLFGGNISLYTSLCERARQDAYERMIDEARRMGGNAIVGMRYDATEIASGVTEVLCYGTAVQAVRAG.

This sequence belongs to the UPF0145 family.

This Burkholderia mallei (strain NCTC 10229) protein is UPF0145 protein BMA10229_A0446.